A 195-amino-acid polypeptide reads, in one-letter code: MKQFIDFIPLVLFFIVYKIDPQNVEFAGFNLSGIYGATATLILASVIVYGALWLKHRHLEKSQWFTLGACLVLGGLTLAFHEDTFLKWKAPLVNWLFALAFAGSHFIGDKPMIQRIMGHAIQLPQGLWVRLNIAWVVFFLVCGFANLYVVFTYPNFWVDFKVFGSLGMTLLFLIGQGIFLARHLHDADTGEKPKD.

The next 5 membrane-spanning stretches (helical) occupy residues 34-54 (IYGA…ALWL), 65-85 (FTLG…EDTF), 88-108 (WKAP…HFIG), 131-151 (LNIA…YVVF), and 160-180 (FKVF…GIFL).

This sequence belongs to the YciB family.

The protein resides in the cell inner membrane. Its function is as follows. Plays a role in cell envelope biogenesis, maintenance of cell envelope integrity and membrane homeostasis. In Pseudomonas paraeruginosa (strain DSM 24068 / PA7) (Pseudomonas aeruginosa (strain PA7)), this protein is Inner membrane-spanning protein YciB.